The primary structure comprises 392 residues: Probable protein phosphatase 2C 22 (392 aa).

A disordered region spans residues 1 to 26; that stretch reads MEETRGISDPENGSSSYGGKPPNPLS. A PPM-type phosphatase domain is found at 89-356; that stretch reads RSGAWSDIGS…DNVTAVVVCL (268 aa). Residues D133, G134, D304, and D347 each coordinate Mn(2+).

This sequence belongs to the PP2C family. The cofactor is Mg(2+). Mn(2+) serves as cofactor.

The enzyme catalyses O-phospho-L-seryl-[protein] + H2O = L-seryl-[protein] + phosphate. It catalyses the reaction O-phospho-L-threonyl-[protein] + H2O = L-threonyl-[protein] + phosphate. This is Probable protein phosphatase 2C 22 from Arabidopsis thaliana (Mouse-ear cress).